The following is a 186-amino-acid chain: Alkyl hydroperoxide reductase AhpD (186 aa).

C132 (proton donor) is an active-site residue. C132 and C135 are joined by a disulfide. Catalysis depends on C135, which acts as the Cysteine sulfenic acid (-SOH) intermediate.

This sequence belongs to the AhpD family.

The catalysed reaction is N(6)-[(R)-dihydrolipoyl]-L-lysyl-[lipoyl-carrier protein] + a hydroperoxide = N(6)-[(R)-lipoyl]-L-lysyl-[lipoyl-carrier protein] + an alcohol + H2O. Its function is as follows. Antioxidant protein with alkyl hydroperoxidase activity. Required for the reduction of the AhpC active site cysteine residues and for the regeneration of the AhpC enzyme activity. In Anaeromyxobacter dehalogenans (strain 2CP-C), this protein is Alkyl hydroperoxide reductase AhpD.